The sequence spans 929 residues: Isoleucine--tRNA ligase (929 aa).

Residues 58–68 carry the 'HIGH' region motif; sequence PYANGDIHIGH. Glu563 is an L-isoleucyl-5'-AMP binding site. The short motif at 605-609 is the 'KMSKS' region element; sequence KMSKS. Lys608 lines the ATP pocket. Zn(2+) is bound by residues Cys892, Cys895, Cys912, and Cys915.

Belongs to the class-I aminoacyl-tRNA synthetase family. IleS type 1 subfamily. As to quaternary structure, monomer. Zn(2+) is required as a cofactor.

It is found in the cytoplasm. The catalysed reaction is tRNA(Ile) + L-isoleucine + ATP = L-isoleucyl-tRNA(Ile) + AMP + diphosphate. Functionally, catalyzes the attachment of isoleucine to tRNA(Ile). As IleRS can inadvertently accommodate and process structurally similar amino acids such as valine, to avoid such errors it has two additional distinct tRNA(Ile)-dependent editing activities. One activity is designated as 'pretransfer' editing and involves the hydrolysis of activated Val-AMP. The other activity is designated 'posttransfer' editing and involves deacylation of mischarged Val-tRNA(Ile). The polypeptide is Isoleucine--tRNA ligase (Neisseria meningitidis serogroup C / serotype 2a (strain ATCC 700532 / DSM 15464 / FAM18)).